A 379-amino-acid chain; its full sequence is Cytochrome b (379 aa).

4 helical membrane passes run 33–53 (FGSL…FLAM), 77–98 (WLIR…YLHI), 113–133 (WNIG…GYVL), and 178–198 (FFAF…VHLL). Residues H83 and H97 each coordinate heme b. Positions 182 and 196 each coordinate heme b. H201 contacts a ubiquinone. 4 consecutive transmembrane segments (helical) span residues 226–246 (TKDF…VLFF), 288–308 (MGGV…PHIQ), 320–340 (ISQF…WIGG), and 347–367 (FIII…AFLP).

This sequence belongs to the cytochrome b family. In terms of assembly, the cytochrome bc1 complex contains 11 subunits: 3 respiratory subunits (MT-CYB, CYC1 and UQCRFS1), 2 core proteins (UQCRC1 and UQCRC2) and 6 low-molecular weight proteins (UQCRH/QCR6, UQCRB/QCR7, UQCRQ/QCR8, UQCR10/QCR9, UQCR11/QCR10 and a cleavage product of UQCRFS1). This cytochrome bc1 complex then forms a dimer. The cofactor is heme b.

The protein localises to the mitochondrion inner membrane. Functionally, component of the ubiquinol-cytochrome c reductase complex (complex III or cytochrome b-c1 complex) that is part of the mitochondrial respiratory chain. The b-c1 complex mediates electron transfer from ubiquinol to cytochrome c. Contributes to the generation of a proton gradient across the mitochondrial membrane that is then used for ATP synthesis. In Dipodomys ordii (Ord's kangaroo rat), this protein is Cytochrome b (MT-CYB).